A 345-amino-acid chain; its full sequence is Sulfate/thiosulfate import ATP-binding protein CysA (345 aa).

The region spanning 3 to 237 is the ABC transporter domain; it reads IQVSGLCKHF…PRTEFVYQFV (235 aa). 35–42 provides a ligand contact to ATP; sequence GPSGCGKT.

This sequence belongs to the ABC transporter superfamily. Sulfate/tungstate importer (TC 3.A.1.6) family. As to quaternary structure, the complex is composed of two ATP-binding proteins (CysA), two transmembrane proteins (CysT and CysW) and a solute-binding protein (CysP).

The protein localises to the cell inner membrane. The enzyme catalyses sulfate(out) + ATP + H2O = sulfate(in) + ADP + phosphate + H(+). It catalyses the reaction thiosulfate(out) + ATP + H2O = thiosulfate(in) + ADP + phosphate + H(+). In terms of biological role, part of the ABC transporter complex CysAWTP involved in sulfate/thiosulfate import. Responsible for energy coupling to the transport system. The protein is Sulfate/thiosulfate import ATP-binding protein CysA of Vibrio vulnificus (strain CMCP6).